The primary structure comprises 103 residues: High-potential iron-sulfur protein (103 aa).

The N-terminal stretch at 1–28 (MSNRRLFLKSIPIMAAAGAVGMAGLARA) is a signal peptide. The [4Fe-4S] cluster site is built by Cys-66, Cys-69, Cys-82, and Cys-96.

This sequence belongs to the high-potential iron-sulfur protein (HiPIP) family. Homodimer.

It localises to the periplasm. In terms of biological role, specific class of high-redox-potential 4Fe-4S ferredoxins. Functions in anaerobic electron transport in most purple and in some other photosynthetic bacteria and in at least one genus (Paracoccus) of halophilic, denitrifying bacteria. The chain is High-potential iron-sulfur protein (hip) from Ralstonia nicotianae (strain ATCC BAA-1114 / GMI1000) (Ralstonia solanacearum).